The following is a 503-amino-acid chain: Sugar phosphate exchanger 3 (503 aa).

Residues 20–40 (YTHHHLAAFLLTFFSYSLLHA) form a helical membrane-spanning segment. Asparagine 62 and asparagine 71 each carry an N-linked (GlcNAc...) asparagine glycan. 5 helical membrane passes run 87–107 (TLFL…GLFI), 119–139 (LVLT…GTLT), 152–172 (LVWI…VAIM), 183–203 (FVFG…AFLA), and 214–234 (AFLV…FGLV). Asparagine 275 carries an N-linked (GlcNAc...) asparagine glycan. 6 consecutive transmembrane segments (helical) span residues 300–322 (GVLL…FFWL), 342–362 (IWYD…SDLM), 367–387 (PVLT…SHSP), 395–415 (FIMS…SSAI), 437–457 (GIVD…VPLI), and 466–486 (VFYF…PLIV).

Belongs to the major facilitator superfamily. Organophosphate:Pi antiporter (OPA) (TC 2.A.1.4) family.

The protein resides in the endoplasmic reticulum membrane. It is found in the lysosome membrane. Its function is as follows. Unlike the other SLC37 members, seems to lack glucose-6-phosphate antiporter activity. The sequence is that of Sugar phosphate exchanger 3 (slc37a3) from Xenopus laevis (African clawed frog).